Here is a 430-residue protein sequence, read N- to C-terminus: Trigger factor (430 aa).

The PPIase FKBP-type domain occupies 157–242; the sequence is GDLVALETWS…AVEVSEPVLP (86 aa).

This sequence belongs to the FKBP-type PPIase family. Tig subfamily.

It localises to the cytoplasm. It carries out the reaction [protein]-peptidylproline (omega=180) = [protein]-peptidylproline (omega=0). Its function is as follows. Involved in protein export. Acts as a chaperone by maintaining the newly synthesized protein in an open conformation. Functions as a peptidyl-prolyl cis-trans isomerase. The polypeptide is Trigger factor (Xanthomonas oryzae pv. oryzae (strain PXO99A)).